The following is a 260-amino-acid chain: Acetylglutamate kinase (260 aa).

Substrate contacts are provided by residues Gly-46 to Gly-47, Arg-68, and Asn-160.

The protein belongs to the acetylglutamate kinase family. ArgB subfamily.

Its subcellular location is the cytoplasm. It carries out the reaction N-acetyl-L-glutamate + ATP = N-acetyl-L-glutamyl 5-phosphate + ADP. Its pathway is amino-acid biosynthesis; L-arginine biosynthesis; N(2)-acetyl-L-ornithine from L-glutamate: step 2/4. In terms of biological role, catalyzes the ATP-dependent phosphorylation of N-acetyl-L-glutamate. This is Acetylglutamate kinase from Shewanella putrefaciens (strain CN-32 / ATCC BAA-453).